The primary structure comprises 181 residues: Alkyl hydroperoxide reductase AhpD (181 aa).

Residue Cys-131 is the Proton donor of the active site. The cysteines at positions 131 and 134 are disulfide-linked. Cys-134 serves as the catalytic Cysteine sulfenic acid (-SOH) intermediate.

It belongs to the AhpD family.

It carries out the reaction N(6)-[(R)-dihydrolipoyl]-L-lysyl-[lipoyl-carrier protein] + a hydroperoxide = N(6)-[(R)-lipoyl]-L-lysyl-[lipoyl-carrier protein] + an alcohol + H2O. Antioxidant protein with alkyl hydroperoxidase activity. Required for the reduction of the AhpC active site cysteine residues and for the regeneration of the AhpC enzyme activity. The protein is Alkyl hydroperoxide reductase AhpD of Bradyrhizobium sp. (strain BTAi1 / ATCC BAA-1182).